The chain runs to 230 residues: Cell division ATP-binding protein FtsE (230 aa).

The 226-residue stretch at 3–228 (ITLDHVTKQY…RDEQRGVYGM (226 aa)) folds into the ABC transporter domain. ATP is bound at residue 37-44 (GPSGSGKS).

It belongs to the ABC transporter superfamily. In terms of assembly, homodimer. Forms a membrane-associated complex with FtsX.

Its subcellular location is the cell membrane. Part of the ABC transporter FtsEX involved in cellular division. Has ATPase activity. This Mycobacterium tuberculosis (strain ATCC 25618 / H37Rv) protein is Cell division ATP-binding protein FtsE.